Here is a 329-residue protein sequence, read N- to C-terminus: Malate dehydrogenase (329 aa).

13–19 (GAAGNIS) provides a ligand contact to NAD(+). The substrate site is built by Arg-94 and Arg-100. Residues Asn-107, Gln-114, and 131 to 133 (VGN) each bind NAD(+). Positions 133 and 164 each coordinate substrate. His-189 serves as the catalytic Proton acceptor.

It belongs to the LDH/MDH superfamily. MDH type 2 family.

The catalysed reaction is (S)-malate + NAD(+) = oxaloacetate + NADH + H(+). Its function is as follows. Catalyzes the reversible oxidation of malate to oxaloacetate. This Psychrobacter cryohalolentis (strain ATCC BAA-1226 / DSM 17306 / VKM B-2378 / K5) protein is Malate dehydrogenase.